A 183-amino-acid chain; its full sequence is Translation initiation factor IF-3 (183 aa).

Polar residues predominate over residues 1 to 13 (MKQPDRNQQQGAK). The interval 1-21 (MKQPDRNQQQGAKSNRPAIND) is disordered.

The protein belongs to the IF-3 family. In terms of assembly, monomer.

It is found in the cytoplasm. In terms of biological role, IF-3 binds to the 30S ribosomal subunit and shifts the equilibrium between 70S ribosomes and their 50S and 30S subunits in favor of the free subunits, thus enhancing the availability of 30S subunits on which protein synthesis initiation begins. This chain is Translation initiation factor IF-3, found in Acinetobacter baumannii (strain AYE).